The chain runs to 544 residues: CTP synthase (544 aa).

Residues 1–266 (MTRFVFITGG…DREVLRHFNL (266 aa)) form an amidoligase domain region. S13 lines the CTP pocket. A UTP-binding site is contributed by S13. 14 to 19 (SLGKGI) contributes to the ATP binding site. Y54 contacts L-glutamine. Residue D71 participates in ATP binding. Mg(2+) contacts are provided by D71 and E140. Residues 147–149 (DIE), 187–192 (KTKPTQ), and K223 contribute to the CTP site. Residues 187-192 (KTKPTQ) and K223 each bind UTP. Positions 292–543 (KIAIVGKYIT…VAAAVRQARL (252 aa)) constitute a Glutamine amidotransferase type-1 domain. L-glutamine is bound at residue G354. Catalysis depends on C381, which acts as the Nucleophile; for glutamine hydrolysis. Residues 382-385 (FGMQ), E405, and R471 contribute to the L-glutamine site. Active-site residues include H516 and E518.

Belongs to the CTP synthase family. Homotetramer.

The enzyme catalyses UTP + L-glutamine + ATP + H2O = CTP + L-glutamate + ADP + phosphate + 2 H(+). It catalyses the reaction L-glutamine + H2O = L-glutamate + NH4(+). The catalysed reaction is UTP + NH4(+) + ATP = CTP + ADP + phosphate + 2 H(+). The protein operates within pyrimidine metabolism; CTP biosynthesis via de novo pathway; CTP from UDP: step 2/2. With respect to regulation, allosterically activated by GTP, when glutamine is the substrate; GTP has no effect on the reaction when ammonia is the substrate. The allosteric effector GTP functions by stabilizing the protein conformation that binds the tetrahedral intermediate(s) formed during glutamine hydrolysis. Inhibited by the product CTP, via allosteric rather than competitive inhibition. Functionally, catalyzes the ATP-dependent amination of UTP to CTP with either L-glutamine or ammonia as the source of nitrogen. Regulates intracellular CTP levels through interactions with the four ribonucleotide triphosphates. The protein is CTP synthase of Granulibacter bethesdensis (strain ATCC BAA-1260 / CGDNIH1).